A 184-amino-acid chain; its full sequence is CKLF-like MARVEL transmembrane domain-containing protein 3 (184 aa).

Residues 1 to 12 show a composition bias toward acidic residues; that stretch reads MWPPDAEPEPDP. Residues 1–22 form a disordered region; it reads MWPPDAEPEPDPESAHGPRSGR. The MARVEL domain maps to 36 to 155; sequence FLCSLKGRLL…DFYLIFNEVA (120 aa). A run of 3 helical transmembrane segments spans residues 64–84, 96–116, and 131–151; these read ASAFLTVPLLEFLLAVYFLFA, LCWPMMDFLRCVTAALIYFVI, and AAGVFGFFATIVFAIDFYLIF. The disordered stretch occupies residues 163-184; the sequence is SGNETTAHRTEEENSNSDSDSD. Acidic residues predominate over residues 175 to 184; it reads ENSNSDSDSD.

This sequence belongs to the chemokine-like factor family.

The protein localises to the membrane. The chain is CKLF-like MARVEL transmembrane domain-containing protein 3 (Cmtm3) from Mus musculus (Mouse).